A 566-amino-acid chain; its full sequence is Zinc finger protein 704 (566 aa).

Disordered regions lie at residues 1–148, 166–203, and 253–324; these read MQAR…ARGA, DFRR…LDQE, and PLVR…DEAD. The span at 12-31 shows a compositional bias: low complexity; sequence LGSRRGGAAPAPAPEAAALG. The segment covering 32–55 has biased composition (pro residues); that stretch reads LPPPGPSPAAAPGSWRPPLPPPRG. The segment covering 56 to 72 has biased composition (low complexity); the sequence is TGPSRAAAASSPVLLLL. The segment covering 91-100 has biased composition (basic and acidic residues); the sequence is RVTEKPRGVA. Positions 101 to 128 are enriched in acidic residues; the sequence is EEEDDDEEEDEEVVVEVVDGDEDDEDAE. Basic and acidic residues predominate over residues 186–203; it reads EDVRTADTKKTSRVLDQE. Over residues 267–290 the composition is skewed to low complexity; the sequence is SGSWKEGAPSSSSSSGYWSWSAPS. The segment at 346–371 adopts a C2H2-type zinc-finger fold; that stretch reads FKCLWKSCGKVLNTAAGIQKHIRAVH. 2 positions are modified to phosphoserine: serine 378 and serine 381. 2 disordered regions span residues 409-436 and 497-535; these read VSPS…CAKT and PVSP…PRGE. Residues 471–566 are sufficient for binding to RE2 sequence motifs; the sequence is GSAKFTPNGS…WKKACQRFID (96 aa). The CR1 signature appears at 537–541; that stretch reads KKCRK. A CR2 motif is present at residues 555-559; the sequence is CRWKK.

Its subcellular location is the nucleus. Transcription factor which binds to RE2 sequence elements in the MYOD1 enhancer. This Mus musculus (Mouse) protein is Zinc finger protein 704.